Reading from the N-terminus, the 101-residue chain is MPRKSVQEREKKRLRLINKYFLRRSLLRKCVVDLKVSSEERWNAVLKLQTLPRDSSPSRLRNRCGRTGRPHAFLRKFGLSRMKVREAAMKGEIPGLRKSSW.

It belongs to the universal ribosomal protein uS14 family. In terms of assembly, part of the 30S ribosomal subunit. Contacts proteins S3 and S10.

Binds 16S rRNA, required for the assembly of 30S particles and may also be responsible for determining the conformation of the 16S rRNA at the A site. In Blochmanniella floridana, this protein is Small ribosomal subunit protein uS14.